Consider the following 336-residue polypeptide: UDP-glucose 4-epimerase (336 aa).

Residues 11 to 12 (YI), 31 to 36 (DNLINS), 58 to 59 (DI), 80 to 84 (FAGLK), N99, S124, Y149, K153, and F178 contribute to the NAD(+) site. Residues S124 and Y149 each coordinate substrate. Y149 acts as the Proton acceptor in catalysis. Residues N179, 199 to 200 (NL), 216 to 218 (LVY), R231, and 290 to 293 (RPGD) contribute to the substrate site.

Belongs to the NAD(P)-dependent epimerase/dehydratase family. In terms of assembly, homodimer. The cofactor is NAD(+).

It carries out the reaction UDP-alpha-D-glucose = UDP-alpha-D-galactose. It participates in carbohydrate metabolism; galactose metabolism. Involved in the metabolism of galactose. Catalyzes the conversion of UDP-galactose (UDP-Gal) to UDP-glucose (UDP-Glc) through a mechanism involving the transient reduction of NAD. The protein is UDP-glucose 4-epimerase (galE) of Yersinia enterocolitica.